The primary structure comprises 245 residues: UPF0246 protein cgR_1824 (245 aa).

This sequence belongs to the UPF0246 family.

The polypeptide is UPF0246 protein cgR_1824 (Corynebacterium glutamicum (strain R)).